The primary structure comprises 802 residues: Phenylalanine--tRNA ligase beta subunit (802 aa).

One can recognise a tRNA-binding domain in the interval 40–155 (SASLKNVVVG…EHVETGVSAI (116 aa)). The region spanning 409-484 (KAVNKIETSL…RIYGYDEIPV (76 aa)) is the B5 domain. The Mg(2+) site is built by aspartate 462, aspartate 468, glutamate 471, and glutamate 472. Positions 709-802 (PRYPEMTRDL…LQAKLHAIIR (94 aa)) constitute an FDX-ACB domain.

This sequence belongs to the phenylalanyl-tRNA synthetase beta subunit family. Type 1 subfamily. As to quaternary structure, tetramer of two alpha and two beta subunits. It depends on Mg(2+) as a cofactor.

It is found in the cytoplasm. The enzyme catalyses tRNA(Phe) + L-phenylalanine + ATP = L-phenylalanyl-tRNA(Phe) + AMP + diphosphate + H(+). This is Phenylalanine--tRNA ligase beta subunit from Listeria innocua serovar 6a (strain ATCC BAA-680 / CLIP 11262).